We begin with the raw amino-acid sequence, 427 residues long: MIYTAIDTFYLTDEQLRDSPSRKDGIDEATETALRVYGCDLIQESGILLKLPQAVMATAQVLFHRFYCKKSFVRFSVKRVAASCVWLAGKLEESPRRSKHIIIVFHRMECRRENVPIEHLDVFSKKYSDLKHDLVRTERHLLKEMGFICHVEHPHKFISNYLATLEAPELTQEAWNLANDSLRTTLCVRFKSEVVACGVVYAAARRHGVPLPEDPPWWNVFDADEAGIQEVCRVLAHLYSLPKSQYIQVYKDNDSFTHRRTSDTNASKESPATTVASDKGTPVPSSSSQEKDALIKAGSDKVKEKGDDDGKTLPSEPNGKEGPAVNLKSEKSESNVDRSRERERDRSRGRDRDSRGRDSDRDSKGRDSDRERERDREADRDRQRRHHSKDRSSGYSDKEKSRHRSSRDRGDHYSSHSSRDKDRHRRQ.

The interval histidine 258 to glutamine 427 is disordered. Residues aspartate 263–alanine 276 are compositionally biased toward polar residues. 4 stretches are compositionally biased toward basic and acidic residues: residues glutamine 289–lysine 311, lysine 328–arginine 382, aspartate 390–lysine 400, and arginine 407–lysine 421.

Belongs to the cyclin family. Cyclin L subfamily.

This Oryza sativa subsp. japonica (Rice) protein is Cyclin-L1-1 (CYCL1-1).